The sequence spans 568 residues: MASPALISETEAWKDLKAHLEGIKMIHLRELMGDTERCQSMMVEFDNIFLDYSRQQASPDTISKLYKLADAAHLKQKIDRMYNGDHINSTENRSVLHVALRAPRNSAICSDGKNVVPDVWNVLDKIKDFSDRVRNGSWIGATGKELKDVIAVGIGGSFLGPLFVHTALQTDPEASKNARGRELRFLANVDPIDVARNISGLNPETTLVVVVSKTFTTAETMLNARTLREWISSALGPSAVAKHMVAVSTNLPLVEKFGIDPNNAFAFWDWVGGRYSVCSAVGVLPLSLQYGFAVVEKFLQGAHSIDQHFSSAPFEKNIPVLLGLLSVWNVSFLGYPARAILPYSQALEKLAPHIQQVSMESNGKGVSIDGLPLPFESGEIDFGEPGTNGQHSFYQLIHQGRVIPCDFIGIVKSQQPVYLKGEVVNNHDELMSNFFAQPDALAYGKTPEQLKNENVSEHLIPHKTFTGNRPSISILLPTLDAYRIGQLLAIYEHRVAVQGFVWGINSFDQWGVELGKSLATQVRKQLHASRVKGEPVEGFNFSTKTLLTRYLEATSDVPADPSTLLPNI.

The active-site Proton donor is E360. Residues H391 and K516 contribute to the active site.

Belongs to the GPI family. Homodimer.

The protein resides in the cytoplasm. It catalyses the reaction alpha-D-glucose 6-phosphate = beta-D-fructose 6-phosphate. The protein operates within carbohydrate degradation; glycolysis; D-glyceraldehyde 3-phosphate and glycerone phosphate from D-glucose: step 2/4. The polypeptide is Glucose-6-phosphate isomerase, cytosolic 1 (PGIC1) (Clarkia xantiana (Gunsight clarkia)).